Here is a 290-residue protein sequence, read N- to C-terminus: L-proline cis-3-hydroxylase 2 (290 aa).

Fe cation is bound by residues histidine 107, aspartate 109, and histidine 158. 2-oxoglutarate is bound at residue arginine 168.

It belongs to the L-proline cis-4-/cis-3-hydroxylase family. As to quaternary structure, homodimer. It depends on Fe(2+) as a cofactor.

It catalyses the reaction L-proline + 2-oxoglutarate + O2 = cis-3-hydroxy-L-proline + succinate + CO2. Its activity is regulated as follows. Inhibited by metal ions such as Co(2+), Zn(2+), Ni(2+) or Cu(2+). Is also inhibited by EDTA in vitro. Its function is as follows. Dioxygenase that catalyzes the 2-oxoglutarate-dependent selective hydroxylation of free L-proline to cis-3-hydroxy-L-proline (cis-3-Hyp). This Streptomyces sp protein is L-proline cis-3-hydroxylase 2.